We begin with the raw amino-acid sequence, 255 residues long: Hydroxyacylglutathione hydrolase (255 aa).

Zn(2+) is bound by residues histidine 53, histidine 55, aspartate 57, histidine 58, histidine 110, aspartate 127, and histidine 165.

Belongs to the metallo-beta-lactamase superfamily. Glyoxalase II family. Monomer. The cofactor is Zn(2+).

It catalyses the reaction an S-(2-hydroxyacyl)glutathione + H2O = a 2-hydroxy carboxylate + glutathione + H(+). It functions in the pathway secondary metabolite metabolism; methylglyoxal degradation; (R)-lactate from methylglyoxal: step 2/2. In terms of biological role, thiolesterase that catalyzes the hydrolysis of S-D-lactoyl-glutathione to form glutathione and D-lactic acid. In Xanthomonas campestris pv. campestris (strain 8004), this protein is Hydroxyacylglutathione hydrolase.